The primary structure comprises 306 residues: Curved DNA-binding protein (306 aa).

A J domain is found at 5-69 (DYYAIMGVKP…QRRAEYDQMW (65 aa)).

Its subcellular location is the cytoplasm. It is found in the nucleoid. Functionally, DNA-binding protein that preferentially recognizes a curved DNA sequence. It is probably a functional analog of DnaJ; displays overlapping activities with DnaJ, but functions under different conditions, probably acting as a molecular chaperone in an adaptive response to environmental stresses other than heat shock. Lacks autonomous chaperone activity; binds native substrates and targets them for recognition by DnaK. Its activity is inhibited by the binding of CbpM. This is Curved DNA-binding protein from Shigella sonnei (strain Ss046).